The primary structure comprises 430 residues: Enolase (430 aa).

Glutamine 163 provides a ligand contact to (2R)-2-phosphoglycerate. Glutamate 205 functions as the Proton donor in the catalytic mechanism. The Mg(2+) site is built by aspartate 242, glutamate 288, and aspartate 315. Lysine 340, arginine 369, serine 370, and lysine 391 together coordinate (2R)-2-phosphoglycerate. Catalysis depends on lysine 340, which acts as the Proton acceptor.

This sequence belongs to the enolase family. The cofactor is Mg(2+).

The protein localises to the cytoplasm. It localises to the secreted. It is found in the cell surface. It carries out the reaction (2R)-2-phosphoglycerate = phosphoenolpyruvate + H2O. It participates in carbohydrate degradation; glycolysis; pyruvate from D-glyceraldehyde 3-phosphate: step 4/5. In terms of biological role, catalyzes the reversible conversion of 2-phosphoglycerate (2-PG) into phosphoenolpyruvate (PEP). It is essential for the degradation of carbohydrates via glycolysis. In Aster yellows witches'-broom phytoplasma (strain AYWB), this protein is Enolase.